A 294-amino-acid polypeptide reads, in one-letter code: MAVTASMVKELREKTGAGMMDCKKALVEVDGDMEKAIDYLREKGIAKAEKKADRVAAEGLASVVTEGNKAVILEVNSETDFVAKNENFQALVTELAEHILAEEPADVEAALAQPFKGGSETVQDHINTAIAKIGEKLSLRRFTVVEKEDADVFGSYLHMGGRIGVLTVIGSSSDQELAKDIAMHVAAINPTYVSRDEVTKDVVDRERDVLKQQALNEGKPENIVEKMVEGRLSKFFEQVCLLDQPFVKDGDQKVGKYVKSKQASVKSFVRYEVGEGIEKREDNFAEEVMSQVKK.

Positions 79-82 (TDFV) are involved in Mg(2+) ion dislocation from EF-Tu.

The protein belongs to the EF-Ts family.

It localises to the cytoplasm. Its function is as follows. Associates with the EF-Tu.GDP complex and induces the exchange of GDP to GTP. It remains bound to the aminoacyl-tRNA.EF-Tu.GTP complex up to the GTP hydrolysis stage on the ribosome. In Shouchella clausii (strain KSM-K16) (Alkalihalobacillus clausii), this protein is Elongation factor Ts.